The sequence spans 594 residues: Proteasome-associated ATPase (594 aa).

A coiled-coil region spans residues 20-98 (DDLAAQVTYL…KEEIDRLAQP (79 aa)). 282-287 (GCGKTL) provides a ligand contact to ATP. The segment at 593-594 (YL) is docks into pockets in the proteasome alpha-ring.

The protein belongs to the AAA ATPase family. Homohexamer. Assembles into a hexameric ring structure that caps the 20S proteasome core. Strongly interacts with the prokaryotic ubiquitin-like protein Pup through a hydrophobic interface; the interacting region of ARC lies in its N-terminal coiled-coil domain. There is one Pup binding site per ARC hexamer ring. Upon ATP-binding, the C-terminus of ARC interacts with the alpha-rings of the proteasome core, possibly by binding to the intersubunit pockets.

Its pathway is protein degradation; proteasomal Pup-dependent pathway. Its function is as follows. ATPase which is responsible for recognizing, binding, unfolding and translocation of pupylated proteins into the bacterial 20S proteasome core particle. May be essential for opening the gate of the 20S proteasome via an interaction with its C-terminus, thereby allowing substrate entry and access to the site of proteolysis. Thus, the C-termini of the proteasomal ATPase may function like a 'key in a lock' to induce gate opening and therefore regulate proteolysis. The sequence is that of Proteasome-associated ATPase from Catenulispora acidiphila (strain DSM 44928 / JCM 14897 / NBRC 102108 / NRRL B-24433 / ID139908).